The sequence spans 230 residues: Protein CbbY (230 aa).

The Nucleophile role is filled by Asp8. Mg(2+) is bound by residues Asp8 and Asp10. Asp8 lines the substrate pocket. Residue Asp10 is the Proton donor of the active site. Residues Glu17, 50–54 (GGKER), 75–78 (HRAK), and 115–121 (TTTSLPN) contribute to the substrate site. Asp176 is a binding site for Mg(2+).

It belongs to the HAD-like hydrolase superfamily. CbbY/CbbZ/Gph/YieH family. Requires Mg(2+) as cofactor.

The catalysed reaction is D-xylulose 1,5-bisphosphate + H2O = D-xylulose 5-phosphate + phosphate. Its function is as follows. Highly selective xylulose-1,5-bisphosphate (XuBP) phosphatase. Also shows activity towards ribulose-1,5-bisphosphate (RuBP) and fructose-1,6-bisphosphate (FBP), but not towards fructose-6-phosphate (F6P) or ribulose-5-phosphate (Ru5P). Degrades xylulose-1,5-bisphosphate, a potent inhibitor of rubisco produced by the rubisco itself. The protein is Protein CbbY of Cereibacter sphaeroides (Rhodobacter sphaeroides).